We begin with the raw amino-acid sequence, 249 residues long: MASASGAMAKHEQILVLDPPSDLKFKGPFTDVVTTNLKLQNPSDRKVCFKVKTTAPRRYCVRPNSGVIDPGSIVTVSVMLQPFDYDPNEKSKHKFMVQTIFAPPNISDMEAVWKEAKPDELMDSKLRCVFEMPNENDKLNDMEPSKAVPLNASKQDGPLPKPHSVSLNDTETRKLMEECKRLQGEMMKLSEENRHLRDEGLRLRKVAHSDKPGSTSAVSFRDNVTSPLPSLLVVIAAIFIGFFLGKFIL.

Position 2 is an N-acetylalanine (A2). Over 2–227 (ASASGAMAKH…VSFRDNVTSP (226 aa)) the chain is Cytoplasmic. The MSP domain maps to 14–131 (ILVLDPPSDL…MDSKLRCVFE (118 aa)). Positions 50–53 (KVKT) are phosphorylated FFAT motif binding. K125 carries the post-translational modification N6-acetyllysine. Residues 135–144 (ENDKLNDMEP) are compositionally biased toward basic and acidic residues. Residues 135-166 (ENDKLNDMEPSKAVPLNASKQDGPLPKPHSVS) are disordered. At S166 the chain carries Phosphoserine. The stretch at 168–207 (NDTETRKLMEECKRLQGEMMKLSEENRHLRDEGLRLRKVA) forms a coiled coil. Phosphothreonine is present on T170. A phosphoserine mark is found at S214, S216, and S219. A helical; Anchor for type IV membrane protein transmembrane segment spans residues 228-248 (LPSLLVVIAAIFIGFFLGKFI).

Belongs to the VAMP-associated protein (VAP) (TC 9.B.17) family. Homodimer; disulfide-linked. Heterodimer with VAPB. Interacts with VAMP1, VAMP2, STX1A, BET1, SEC22C and with the C-terminal domain of OCLN. Interacts (via MSP domain) with OSBPL1A (via FFAT motif). Interacts (via MSP domain) with ZFYVE27; may retain ZFYVE27 in the endoplasmic reticulum and regulate its function in cell projections formation. Interacts with OSBP. Interacts (via C-terminus) with RSAD2/viperin (via C-terminus). Interacts with IFITM3. Interacts with OSBPL3 (phosphorylated form). Interacts with KIF5A in a ZFYVE27-dependent manner. Interacts (via MSP domain) with STARD3 (via phosphorylated FFAT motif); this interaction recruits VAPA to the endosome. Interacts with STARD3NL (via FFAT motif). Interacts with CERT1. Interacts with PLEKHA3 and SACM1L to form a ternary complex. Interacts with VPS13A (via FFAT motif). Interacts with RB1CC1 (via phosphorylated FFAT motif), MIGA2 (via phosphorylated FFAT motif), RMDN3 (via phosphorylated FFAT motif), KCNB1 (via phosphorylated FFAT motif) and KCNB2 (via phosphorylated FFAT motif). Interacts (via MSP domain) with WDR44; the interactions connect the endoplasmic reticulum (ER) with the endosomal tubule. Ubiquitous.

The protein localises to the endoplasmic reticulum membrane. It localises to the cell membrane. It is found in the cell junction. The protein resides in the tight junction. Its subcellular location is the nucleus membrane. Its function is as follows. Endoplasmic reticulum (ER)-anchored protein that mediates the formation of contact sites between the ER and endosomes via interaction with FFAT motif-containing proteins such as STARD3 or WDR44. STARD3-VAPA interaction enables cholesterol transfer from the ER to endosomes. Via interaction with WDR44 participates in neosynthesized protein export. In addition, recruited to the plasma membrane through OSBPL3 binding. The OSBPL3-VAPA complex stimulates RRAS signaling which in turn attenuates integrin beta-1 (ITGB1) activation at the cell surface. With OSBPL3, may regulate ER morphology. May play a role in vesicle trafficking. The protein is Vesicle-associated membrane protein-associated protein A of Rattus norvegicus (Rat).